The sequence spans 229 residues: Potassium/proton antiporter CemA (229 aa).

A run of 3 helical transmembrane segments spans residues 6–26 (AFIPFFYFLSIVFLPWLISLC), 107–127 (ILHFSTNLISFVILSGYSFWG), and 189–209 (ILSGLVSTFPVILDTIFKYWI).

The protein belongs to the CemA family.

The protein localises to the plastid. Its subcellular location is the chloroplast inner membrane. The enzyme catalyses K(+)(in) + H(+)(out) = K(+)(out) + H(+)(in). Contributes to K(+)/H(+) antiport activity by supporting proton efflux to control proton extrusion and homeostasis in chloroplasts in a light-dependent manner to modulate photosynthesis. Prevents excessive induction of non-photochemical quenching (NPQ) under continuous-light conditions. Indirectly promotes efficient inorganic carbon uptake into chloroplasts. This chain is Potassium/proton antiporter CemA, found in Arabidopsis thaliana (Mouse-ear cress).